The chain runs to 184 residues: Photosystem I assembly protein Ycf4 (184 aa).

The next 2 membrane-spanning stretches (helical) occupy residues 22–42 (FCWA…GTSS) and 57–77 (IVFF…LFIS).

Belongs to the Ycf4 family.

It localises to the plastid. It is found in the chloroplast thylakoid membrane. Seems to be required for the assembly of the photosystem I complex. The sequence is that of Photosystem I assembly protein Ycf4 from Helianthus annuus (Common sunflower).